Here is a 185-residue protein sequence, read N- to C-terminus: Elongation factor P (185 aa).

This sequence belongs to the elongation factor P family.

Its subcellular location is the cytoplasm. It participates in protein biosynthesis; polypeptide chain elongation. Its function is as follows. Involved in peptide bond synthesis. Stimulates efficient translation and peptide-bond synthesis on native or reconstituted 70S ribosomes in vitro. Probably functions indirectly by altering the affinity of the ribosome for aminoacyl-tRNA, thus increasing their reactivity as acceptors for peptidyl transferase. The protein is Elongation factor P of Anoxybacillus flavithermus (strain DSM 21510 / WK1).